The sequence spans 290 residues: 33 kDa chaperonin (290 aa).

2 disulfides stabilise this stretch: cysteine 231-cysteine 233 and cysteine 263-cysteine 266.

This sequence belongs to the HSP33 family. Under oxidizing conditions two disulfide bonds are formed involving the reactive cysteines. Under reducing conditions zinc is bound to the reactive cysteines and the protein is inactive.

Its subcellular location is the cytoplasm. Functionally, redox regulated molecular chaperone. Protects both thermally unfolding and oxidatively damaged proteins from irreversible aggregation. Plays an important role in the bacterial defense system toward oxidative stress. The polypeptide is 33 kDa chaperonin (Thermotoga petrophila (strain ATCC BAA-488 / DSM 13995 / JCM 10881 / RKU-1)).